A 149-amino-acid chain; its full sequence is Probable flagellum biosynthesis repressor protein FlbT (149 aa).

This sequence belongs to the FlbT family.

Has a post-transcriptional repressor function in flagellum biogenesis. Associates with the 5'-UTR of fljK mRNA and promotes its degradation. The polypeptide is Probable flagellum biosynthesis repressor protein FlbT (Rhizobium leguminosarum bv. trifolii (strain WSM2304)).